A 323-amino-acid chain; its full sequence is Breast cancer metastasis-suppressor 1-like protein (323 aa).

Residues Met1–Glu17 are compositionally biased toward basic and acidic residues. Positions Met1–Arg56 are disordered. The span at Met18–Asp53 shows a compositional bias: acidic residues. Coiled coils occupy residues Glu52–Leu84 and Glu149–Glu180. Ser197 carries the phosphoserine modification. Glycyl lysine isopeptide (Lys-Gly) (interchain with G-Cter in SUMO2) cross-links involve residues Lys240 and Lys246.

It belongs to the BRMS1 family. As to quaternary structure, component of the Sin3/HDAC1 corepressor complex at least composed of BRMS1, BRMS1L and ING2/ING1L. Interacts with HDAC and SIN3A.

The protein resides in the nucleus. Its function is as follows. Involved in the histone deacetylase (HDAC1)-dependent transcriptional repression activity. When overexpressed in lung cancer cell line that lacks p53/TP53 expression, inhibits cell growth. The chain is Breast cancer metastasis-suppressor 1-like protein (BRMS1L) from Bos taurus (Bovine).